A 547-amino-acid chain; its full sequence is MAFQDLLDQVGGLGRFQILQMVFLIMFNVIVYHQTQLENFAAFILDHRCWVHILDNDTIPDNDPGTLSQDALLRISIPFDSNLRPEKCRRFVHPQWKLIHLNGTFPNTSEPDTEPCVDGWVYDQSSFPSTIVTKWDLVCESQPLNSVAKFLFMAGMMVGGNLYGHLSDRFGRKFVLRWSYLQLAIVGTCAAFAPTILVYCSLRFLAGAATFSIIVNTVLLIVEWITHQFCAMALTLTLCAASIGHITLGSLAFVIRDQCILQLVMSAPCFVFFLFSRWLAESARWLIINNKPEEGLKELRKAAHRNGMKNAEDILTMEVLKSTMKQELEAAQKKHSLCELLRIPNICKRICFLSFVRFASTIPFWGLTLHLQHLGNNVFLLQTLFGAVTLLANCVAPWALNHMSRRLSQMLLMFLLATCLLAIIFVPQEMQTLRVVLATLGVGAASLGITCSTAQENELIPSIIRGRATGITGNFANIGGALASLMMILSIYSRPLPWIIYGVFAILSGLVVLLLPETRNQPLLDSIQDVENEGVNSLAAPQRSSVL.

Over 1–9 (MAFQDLLDQ) the chain is Cytoplasmic. A helical membrane pass occupies residues 10 to 30 (VGGLGRFQILQMVFLIMFNVI). Residues 31-145 (VYHQTQLENF…DLVCESQPLN (115 aa)) are Extracellular-facing. Residues asparagine 56 and asparagine 102 are each glycosylated (N-linked (GlcNAc...) asparagine). The chain crosses the membrane as a helical span at residues 146–166 (SVAKFLFMAGMMVGGNLYGHL). Over 167 to 177 (SDRFGRKFVLR) the chain is Cytoplasmic. A helical membrane pass occupies residues 178-198 (WSYLQLAIVGTCAAFAPTILV). Residues 199 to 204 (YCSLRF) lie on the Extracellular side of the membrane. A helical membrane pass occupies residues 205-225 (LAGAATFSIIVNTVLLIVEWI). At 226 to 234 (THQFCAMAL) the chain is on the cytoplasmic side. The chain crosses the membrane as a helical span at residues 235 to 255 (TLTLCAASIGHITLGSLAFVI). Residues 256–259 (RDQC) lie on the Extracellular side of the membrane. The chain crosses the membrane as a helical span at residues 260–280 (ILQLVMSAPCFVFFLFSRWLA). Residues 281–349 (ESARWLIINN…LLRIPNICKR (69 aa)) lie on the Cytoplasmic side of the membrane. Residues 350-370 (ICFLSFVRFASTIPFWGLTLH) form a helical membrane-spanning segment. Topologically, residues 371–377 (LQHLGNN) are extracellular. The helical transmembrane segment at 378-398 (VFLLQTLFGAVTLLANCVAPW) threads the bilayer. Topologically, residues 399-406 (ALNHMSRR) are cytoplasmic. Residues 407–427 (LSQMLLMFLLATCLLAIIFVP) form a helical membrane-spanning segment. Residues 428–434 (QEMQTLR) are Extracellular-facing. The helical transmembrane segment at 435–455 (VVLATLGVGAASLGITCSTAQ) threads the bilayer. Residues 456-470 (ENELIPSIIRGRATG) lie on the Cytoplasmic side of the membrane. A helical membrane pass occupies residues 471–491 (ITGNFANIGGALASLMMILSI). Residues 492–494 (YSR) are Extracellular-facing. Residues 495–515 (PLPWIIYGVFAILSGLVVLLL) form a helical membrane-spanning segment. Over 516 to 547 (PETRNQPLLDSIQDVENEGVNSLAAPQRSSVL) the chain is Cytoplasmic.

The protein belongs to the major facilitator (TC 2.A.1) superfamily. Organic cation transporter (TC 2.A.1.19) family. Expressed exclusively in liver in both embryo and adult.

The protein localises to the membrane. The polypeptide is Solute carrier family 22 member 25 (Homo sapiens (Human)).